A 418-amino-acid chain; its full sequence is Inward rectifier potassium channel 16 (418 aa).

The Cytoplasmic portion of the chain corresponds to 1-67 (MSYYGSSYHI…VVDIFTTLVD (67 aa)). A helical membrane pass occupies residues 68 to 94 (TKWRHMFVIFSLSYILSWLIFGSVFWL). At 95-117 (IAFHHGDLLNDPDITPCVDNVHS) the chain is on the extracellular side. Positions 118-134 (FTGAFLFSLETQTTIGY) form an intramembrane region, helical; Pore-forming. The Selectivity filter motif lies at 131–136 (TIGYGY). The Extracellular segment spans residues 135-143 (GYRCVTEEC). A helical membrane pass occupies residues 144–171 (SVAVLMVILQSILSCIINTFIIGAALAK). The Cytoplasmic segment spans residues 172 to 418 (MATARKRAQT…LNRISVESQM (247 aa)). 2 positions are modified to phosphoserine: serine 373 and serine 375.

The protein belongs to the inward rectifier-type potassium channel (TC 1.A.2.1) family. KCNJ16 subfamily. It forms heteromeric channels with Kir4.1/KCNJ10; this interaction is required for KCNJ16 localization to the basolateral membrane in kidney cells. As a heteromer with KCNJ10, may interact with MAGI1; this interaction may facilitate KCNJ10/KCNJ16 potassium channel expression at the basolateral membrane in kidney cells. May form heteromers with Kir2.1/KCNJ2. Can form heteromeric channels with Kir4.2/KCNJ15. In terms of tissue distribution, widely expressed, with highest levels in adult and fetal kidney (at protein level). In the kidney, expressed in the proximal and distal convoluted tubules, but not in glomeruli nor collecting ducts.

It localises to the membrane. The protein resides in the basolateral cell membrane. It catalyses the reaction K(+)(in) = K(+)(out). With respect to regulation, channel activity is strongly regulated by variations of cytosolic pH; channels are activated by alkaline and inhibited by acidic pH values. Activated by phosphatidylinositol 4,5 biphosphate (PtdIns(4,5)P2). Its function is as follows. Inward rectifier potassium channels are characterized by a greater tendency to allow potassium to flow into the cell rather than out of it. Their voltage dependence is regulated by the concentration of extracellular potassium; as external potassium is raised, the voltage range of the channel opening shifts to more positive voltages. The inward rectification is mainly due to the blockage of outward current by internal magnesium. KCNJ16 may be involved in the regulation of fluid and pH balance. In the kidney, together with KCNJ10, mediates basolateral K(+) recycling in distal tubules; this process is critical for Na(+) reabsorption at the tubules. This chain is Inward rectifier potassium channel 16 (KCNJ16), found in Homo sapiens (Human).